Consider the following 264-residue polypeptide: Ribosomal protein L11 methyltransferase (264 aa).

4 residues coordinate S-adenosyl-L-methionine: threonine 116, glycine 137, aspartate 159, and asparagine 200.

Belongs to the methyltransferase superfamily. PrmA family.

The protein resides in the cytoplasm. It catalyses the reaction L-lysyl-[protein] + 3 S-adenosyl-L-methionine = N(6),N(6),N(6)-trimethyl-L-lysyl-[protein] + 3 S-adenosyl-L-homocysteine + 3 H(+). Methylates ribosomal protein L11. The sequence is that of Ribosomal protein L11 methyltransferase from Thermotoga neapolitana (strain ATCC 49049 / DSM 4359 / NBRC 107923 / NS-E).